Reading from the N-terminus, the 380-residue chain is L-lactate dehydrogenase (380 aa).

The region spanning Met-1–Ala-380 is the FMN hydroxy acid dehydrogenase domain. Residue Tyr-24 coordinates substrate. FMN is bound by residues Ser-106 and Gln-127. Tyr-129 serves as a coordination point for substrate. Position 155 (Thr-155) interacts with FMN. Arg-164 contributes to the substrate binding site. Lys-251 serves as a coordination point for FMN. Catalysis depends on His-275, which acts as the Proton acceptor. Arg-278 contacts substrate. Position 306 to 330 (Asp-306 to Arg-330) interacts with FMN.

It belongs to the FMN-dependent alpha-hydroxy acid dehydrogenase family. Homotetramer. The cofactor is FMN.

The protein resides in the cell inner membrane. The catalysed reaction is (S)-lactate + A = pyruvate + AH2. Its function is as follows. Catalyzes the conversion of L-lactate to pyruvate. Is coupled to the respiratory chain. The protein is L-lactate dehydrogenase of Pseudomonas syringae pv. syringae (strain B728a).